Reading from the N-terminus, the 80-residue chain is Small ribosomal subunit protein bS16 (80 aa).

This sequence belongs to the bacterial ribosomal protein bS16 family.

The sequence is that of Small ribosomal subunit protein bS16 from Acholeplasma laidlawii (strain PG-8A).